The chain runs to 151 residues: Large ribosomal subunit protein bL9 (151 aa).

It belongs to the bacterial ribosomal protein bL9 family.

Functionally, binds to the 23S rRNA. This is Large ribosomal subunit protein bL9 from Chlorobium phaeovibrioides (strain DSM 265 / 1930) (Prosthecochloris vibrioformis (strain DSM 265)).